Consider the following 416-residue polypeptide: Phosphoribosylamine--glycine ligase (416 aa).

The region spanning 107–303 (KDVMACAGVP…LAGLLMAAAT (197 aa)) is the ATP-grasp domain. 133-184 (LAAFGAPYVVKDDGLAAGKGVVVTDDVEAARAHANACDRVVVEEFLDGPEVS) provides a ligand contact to ATP. Residues Glu-273 and Asn-275 each coordinate Mg(2+).

Belongs to the GARS family. The cofactor is Mg(2+). Mn(2+) serves as cofactor.

The enzyme catalyses 5-phospho-beta-D-ribosylamine + glycine + ATP = N(1)-(5-phospho-beta-D-ribosyl)glycinamide + ADP + phosphate + H(+). Its pathway is purine metabolism; IMP biosynthesis via de novo pathway; N(1)-(5-phospho-D-ribosyl)glycinamide from 5-phospho-alpha-D-ribose 1-diphosphate: step 2/2. The protein is Phosphoribosylamine--glycine ligase of Streptomyces coelicolor (strain ATCC BAA-471 / A3(2) / M145).